Here is a 407-residue protein sequence, read N- to C-terminus: Tryptophan synthase beta chain (407 aa).

At Lys-91 the chain carries N6-(pyridoxal phosphate)lysine.

This sequence belongs to the TrpB family. In terms of assembly, tetramer of two alpha and two beta chains. It depends on pyridoxal 5'-phosphate as a cofactor.

The catalysed reaction is (1S,2R)-1-C-(indol-3-yl)glycerol 3-phosphate + L-serine = D-glyceraldehyde 3-phosphate + L-tryptophan + H2O. It participates in amino-acid biosynthesis; L-tryptophan biosynthesis; L-tryptophan from chorismate: step 5/5. Its function is as follows. The beta subunit is responsible for the synthesis of L-tryptophan from indole and L-serine. This chain is Tryptophan synthase beta chain, found in Streptococcus pneumoniae serotype 2 (strain D39 / NCTC 7466).